The following is a 326-amino-acid chain: Cell surface glycoprotein CD200 receptor 1 (326 aa).

A signal peptide spans 1 to 25 (MFCFWRTSALAVLLIWGVFVAGSSC). Residues 26–238 (TDKNQTTQNN…SRGGNQSLRP (213 aa)) are Extracellular-facing. N-linked (GlcNAc...) asparagine glycosylation is found at Asn29, Asn34, Asn35, Asn44, Asn93, Asn101, Asn159, Asn192, Asn207, Asn221, and Asn233. The Ig-like V-type domain occupies 51 to 136 (IGTKALLCCF…YTCETVTPEG (86 aa)). Cystine bridges form between Cys58-Cys129 and Cys82-Cys97. The 92-residue stretch at 138–229 (FEKNYDLQVL…GNQSLSIELS (92 aa)) folds into the Ig-like C2-type domain. Cystine bridges form between Cys164–Cys213 and Cys183–Cys201. A helical transmembrane segment spans residues 239–259 (YIPYIIPSIIILIIIGCICLL). Over 260 to 326 (KISGFRKCKL…DCLTLSAIGI (67 aa)) the chain is Cytoplasmic.

The protein belongs to the CD200R family. As to quaternary structure, CD200 and CD200R1 interact via their respective N-terminal Ig-like domains. As to expression, expressed in granulocytes, monocytes, most T-cells and a subset of NK, NKT and B-cells (at protein level). Expressed in the spleen, lung, liver, testis, bone marrow, lymph nodes, spinal cord, kidney, uterus and small intestine. Expressed in mast and dendritic cells. Expressed in the lung of N.brasiliensis-infected mice.

The protein resides in the cell membrane. Functionally, inhibitory receptor for the CD200/OX2 cell surface glycoprotein. Limits inflammation by inhibiting the expression of pro-inflammatory molecules including TNF-alpha, interferons, and inducible nitric oxide synthase (iNOS) in response to selected stimuli. The polypeptide is Cell surface glycoprotein CD200 receptor 1 (Cd200r1) (Mus musculus (Mouse)).